Here is a 222-residue protein sequence, read N- to C-terminus: Orotidine 5'-phosphate decarboxylase (222 aa).

Residues Asp-11, Lys-30, 59-68, Ser-115, 164-174, Gly-187, and Arg-188 each bind substrate; these read DFKLADIGYI and PGMGSQGGSYG. Lys-61 (proton donor) is an active-site residue.

Belongs to the OMP decarboxylase family. Type 1 subfamily. Homodimer.

It catalyses the reaction orotidine 5'-phosphate + H(+) = UMP + CO2. It participates in pyrimidine metabolism; UMP biosynthesis via de novo pathway; UMP from orotate: step 2/2. Functionally, catalyzes the decarboxylation of orotidine 5'-monophosphate (OMP) to uridine 5'-monophosphate (UMP). In Saccharolobus solfataricus (strain ATCC 35092 / DSM 1617 / JCM 11322 / P2) (Sulfolobus solfataricus), this protein is Orotidine 5'-phosphate decarboxylase.